Reading from the N-terminus, the 306-residue chain is Recombination-associated protein RdgC (306 aa).

The protein belongs to the RdgC family.

Its subcellular location is the cytoplasm. It localises to the nucleoid. May be involved in recombination. This Pseudomonas fluorescens (strain Pf0-1) protein is Recombination-associated protein RdgC.